Here is a 278-residue protein sequence, read N- to C-terminus: Acyl-[acyl-carrier-protein]--UDP-N-acetylglucosamine O-acyltransferase (278 aa).

The protein belongs to the transferase hexapeptide repeat family. LpxA subfamily. In terms of assembly, homotrimer.

Its subcellular location is the cytoplasm. The catalysed reaction is a (3R)-hydroxyacyl-[ACP] + UDP-N-acetyl-alpha-D-glucosamine = a UDP-3-O-[(3R)-3-hydroxyacyl]-N-acetyl-alpha-D-glucosamine + holo-[ACP]. Its pathway is glycolipid biosynthesis; lipid IV(A) biosynthesis; lipid IV(A) from (3R)-3-hydroxytetradecanoyl-[acyl-carrier-protein] and UDP-N-acetyl-alpha-D-glucosamine: step 1/6. In terms of biological role, involved in the biosynthesis of lipid A, a phosphorylated glycolipid that anchors the lipopolysaccharide to the outer membrane of the cell. This Brucella abortus (strain S19) protein is Acyl-[acyl-carrier-protein]--UDP-N-acetylglucosamine O-acyltransferase.